Here is a 135-residue protein sequence, read N- to C-terminus: Holo-[acyl-carrier-protein] synthase (135 aa).

Mg(2+) is bound by residues aspartate 8 and glutamate 58.

This sequence belongs to the P-Pant transferase superfamily. AcpS family. The cofactor is Mg(2+).

The protein resides in the cytoplasm. It catalyses the reaction apo-[ACP] + CoA = holo-[ACP] + adenosine 3',5'-bisphosphate + H(+). Its function is as follows. Transfers the 4'-phosphopantetheine moiety from coenzyme A to a Ser of acyl-carrier-protein. In Ligilactobacillus salivarius (strain UCC118) (Lactobacillus salivarius), this protein is Holo-[acyl-carrier-protein] synthase.